The sequence spans 195 residues: GTP-dependent dephospho-CoA kinase (195 aa).

GTP-binding residues include aspartate 49, valine 50, aspartate 68, glutamate 127, and aspartate 150.

This sequence belongs to the GTP-dependent DPCK family.

It catalyses the reaction 3'-dephospho-CoA + GTP = GDP + CoA + H(+). Its pathway is cofactor biosynthesis; coenzyme A biosynthesis. Catalyzes the GTP-dependent phosphorylation of the 3'-hydroxyl group of dephosphocoenzyme A to form coenzyme A (CoA). In Methanosarcina mazei (strain ATCC BAA-159 / DSM 3647 / Goe1 / Go1 / JCM 11833 / OCM 88) (Methanosarcina frisia), this protein is GTP-dependent dephospho-CoA kinase.